The chain runs to 335 residues: Fructose-1,6-bisphosphatase class 1 (335 aa).

Residues Glu92, Asp114, Leu116, and Asp117 each coordinate Mg(2+). Substrate is bound by residues 117 to 120 (DGSS), Asn209, and Lys275. Position 281 (Glu281) interacts with Mg(2+).

Belongs to the FBPase class 1 family. As to quaternary structure, homotetramer. It depends on Mg(2+) as a cofactor.

The protein resides in the cytoplasm. It carries out the reaction beta-D-fructose 1,6-bisphosphate + H2O = beta-D-fructose 6-phosphate + phosphate. It functions in the pathway carbohydrate biosynthesis; gluconeogenesis. The sequence is that of Fructose-1,6-bisphosphatase class 1 from Delftia acidovorans (strain DSM 14801 / SPH-1).